We begin with the raw amino-acid sequence, 1892 residues long: Protein TIC 214 (1892 aa).

A run of 6 helical transmembrane segments spans residues 12-32 (LISL…YYGF), 68-88 (FIAG…HLAL), 89-109 (GKPH…FFWN), 128-148 (LSIQ…HFIL), 176-196 (VGWL…LVWI), and 225-245 (IFSI…PSPI). Residues 256–266 (PEEVGESEEER) show a composition bias toward acidic residues. The tract at residues 256–299 (PEEVGESEEERNIEIETISEGGGANQKQGTEENTSSSLFSEEEV) is disordered. Polar residues predominate over residues 280 to 294 (NQKQGTEENTSSSLF). The helical transmembrane segment at 1115 to 1135 (FYFFINFFIEKIYMDILLYII) threads the bilayer. A disordered region spans residues 1613–1636 (SNQEKDVEEDYDKSDKKKRRKKKQ).

The protein belongs to the TIC214 family. As to quaternary structure, part of the Tic complex.

The protein resides in the plastid. The protein localises to the chloroplast inner membrane. Functionally, involved in protein precursor import into chloroplasts. May be part of an intermediate translocation complex acting as a protein-conducting channel at the inner envelope. The polypeptide is Protein TIC 214 (Gossypium hirsutum (Upland cotton)).